The primary structure comprises 459 residues: U-box domain-containing protein 75 (459 aa).

Residues 64 to 138 (AVPAVFICPI…AAWFSRRYTR (75 aa)) form the U-box domain. 2 ARM repeats span residues 188 to 229 (QSVT…GVPL) and 231 to 270 (ADAK…ILME).

As to quaternary structure, interacts with GPA1. As to expression, expressed highly in panicles at flowering time, at moderate levels in vegetative shoot apices, leaf sheaths, leaf blades, and elongating internodes, and at low levels in roots.

Its subcellular location is the cell membrane. It carries out the reaction S-ubiquitinyl-[E2 ubiquitin-conjugating enzyme]-L-cysteine + [acceptor protein]-L-lysine = [E2 ubiquitin-conjugating enzyme]-L-cysteine + N(6)-ubiquitinyl-[acceptor protein]-L-lysine.. It participates in protein modification; protein ubiquitination. In terms of biological role, E3 ubiquitin ligase that may function as positive regulator of brassinosteroid (BR) signaling. Possesses E3 ubiquitin ligase in vitro. Acts together with the heterotrimeric G alpha subunit GPA1 at the plasma membrane to mediate a BR signaling pathway that affects plant growth and development. Does not seem to be involved in gibberellin or cytokinin responses. The chain is U-box domain-containing protein 75 from Oryza sativa subsp. japonica (Rice).